Consider the following 449-residue polypeptide: Allantoinase (449 aa).

Zn(2+) contacts are provided by H61, H63, K148, H184, H240, and D313. The residue at position 148 (K148) is an N6-carboxylysine.

The protein belongs to the metallo-dependent hydrolases superfamily. Allantoinase family. As to quaternary structure, homotetramer. Zn(2+) serves as cofactor. In terms of processing, carboxylation allows a single lysine to coordinate two zinc ions.

It carries out the reaction (S)-allantoin + H2O = allantoate + H(+). It participates in nitrogen metabolism; (S)-allantoin degradation; allantoate from (S)-allantoin: step 1/1. Catalyzes the conversion of allantoin (5-ureidohydantoin) to allantoic acid by hydrolytic cleavage of the five-member hydantoin ring. The protein is Allantoinase of Desulfitobacterium hafniense (strain DSM 10664 / DCB-2).